Consider the following 233-residue polypeptide: Small ribosomal subunit protein uS3 (233 aa).

Positions 39–107 (VRTFLTKELK…PAQINISEVR (69 aa)) constitute a KH type-2 domain.

Belongs to the universal ribosomal protein uS3 family. As to quaternary structure, part of the 30S ribosomal subunit. Forms a tight complex with proteins S10 and S14.

Binds the lower part of the 30S subunit head. Binds mRNA in the 70S ribosome, positioning it for translation. The polypeptide is Small ribosomal subunit protein uS3 (Pseudoalteromonas translucida (strain TAC 125)).